A 100-amino-acid chain; its full sequence is Small ribosomal subunit protein uS14c (100 aa).

It belongs to the universal ribosomal protein uS14 family. As to quaternary structure, part of the 30S ribosomal subunit.

Its subcellular location is the plastid. It is found in the chloroplast. In terms of biological role, binds 16S rRNA, required for the assembly of 30S particles. The chain is Small ribosomal subunit protein uS14c from Cucumis sativus (Cucumber).